Here is a 106-residue protein sequence, read N- to C-terminus: Urease subunit beta (106 aa).

Belongs to the urease beta subunit family. As to quaternary structure, heterotrimer of UreA (gamma), UreB (beta) and UreC (alpha) subunits. Three heterotrimers associate to form the active enzyme.

It localises to the cytoplasm. It catalyses the reaction urea + 2 H2O + H(+) = hydrogencarbonate + 2 NH4(+). It participates in nitrogen metabolism; urea degradation; CO(2) and NH(3) from urea (urease route): step 1/1. The sequence is that of Urease subunit beta from Synechococcus sp. (strain CC9311).